A 105-amino-acid chain; its full sequence is Large ribosomal subunit protein bL21 (105 aa).

This sequence belongs to the bacterial ribosomal protein bL21 family. As to quaternary structure, part of the 50S ribosomal subunit. Contacts protein L20.

In terms of biological role, this protein binds to 23S rRNA in the presence of protein L20. This Rhizobium johnstonii (strain DSM 114642 / LMG 32736 / 3841) (Rhizobium leguminosarum bv. viciae) protein is Large ribosomal subunit protein bL21.